Reading from the N-terminus, the 57-residue chain is Preprotein translocase subunit SecG (57 aa).

The Cytoplasmic segment spans residues 1–31; it reads MAKKKGEGPGLMSSAGLMRYFESEETSIKLD. A helical transmembrane segment spans residues 32–53; it reads PKMVIGAGIASGVAIMALNITF. Residues 54-57 are Extracellular-facing; that stretch reads GLWP.

The protein belongs to the SEC61-beta family. As to quaternary structure, component of the protein translocase complex. Heterotrimer consisting of alpha (SecY), beta (SecG) and gamma (SecE) subunits. Can form oligomers of the heterotrimer.

It localises to the cell membrane. Its function is as follows. Involved in protein export. The function of the beta subunit is unknown, but it may be involved in stabilization of the trimeric complex. The chain is Preprotein translocase subunit SecG from Methanothrix thermoacetophila (strain DSM 6194 / JCM 14653 / NBRC 101360 / PT) (Methanosaeta thermophila).